The primary structure comprises 341 residues: Heat-shock protein cognate (HSC) co-chaperone sgt12 (341 aa).

The tract at residues 86-123 is disordered; it reads PSKEPASAGAQAQSTEAQQPKAGAPTPESDKLKSEGNA. TPR repeat units follow at residues 114-147, 148-181, and 182-215; these read SDKL…APAN, PIYL…DPKY, and SKAW…EGNG. Residues 232–280 form a disordered region; the sequence is EEANRGAEPPADDVDDAAGASRGAGGMPDLSSLASMLGGRGGGGGGMPD. Over residues 269–278 the composition is skewed to gly residues; sequence GGRGGGGGGM.

It belongs to the SGT family. As to quaternary structure, forms homodimers. Component of the get4/get5/sgt2 sorting complex. Dimers of sgt2 bind directly a single get5. Binds HSC family members ssa1, sse1, hsp104 and hsc82 via its TPR domain.

It is found in the cytoplasm. Its function is as follows. Heat-shock protein cognate (HSC) co-chaperone that preferentially binds endoplasmic reticulum-destined tail-anchored (TA) proteins and directs them to the GET (guided entry of TA proteins) pathway via get4 and get5. Get4 and get5 form an obligate complex that catalyzes the transfer of tail-anchored proteins destined to the endoplasmic reticulum from sgt2 to the cytosolic targeting factor which then targets the TA protein to the ER membrane via get1/get2. In Aspergillus fumigatus (strain ATCC MYA-4609 / CBS 101355 / FGSC A1100 / Af293) (Neosartorya fumigata), this protein is Heat-shock protein cognate (HSC) co-chaperone sgt12.